A 339-amino-acid chain; its full sequence is Ketol-acid reductoisomerase (NADP(+)) (339 aa).

The 182-residue stretch at 1–182 (MRVYYDRDAD…GGGRAGVIET (182 aa)) folds into the KARI N-terminal Rossmann domain. NADP(+) contacts are provided by residues 24–27 (YGSQ), Arg-48, Ser-51, Thr-53, and 83–86 (DELQ). His-108 is a catalytic residue. Residue Gly-134 participates in NADP(+) binding. A KARI C-terminal knotted domain is found at 183–328 (TFKEECETDL…KKLRSMMPWI (146 aa)). Mg(2+)-binding residues include Asp-191, Glu-195, Glu-227, and Glu-231. Ser-252 is a binding site for substrate.

This sequence belongs to the ketol-acid reductoisomerase family. It depends on Mg(2+) as a cofactor.

The catalysed reaction is (2R)-2,3-dihydroxy-3-methylbutanoate + NADP(+) = (2S)-2-acetolactate + NADPH + H(+). It catalyses the reaction (2R,3R)-2,3-dihydroxy-3-methylpentanoate + NADP(+) = (S)-2-ethyl-2-hydroxy-3-oxobutanoate + NADPH + H(+). The protein operates within amino-acid biosynthesis; L-isoleucine biosynthesis; L-isoleucine from 2-oxobutanoate: step 2/4. It participates in amino-acid biosynthesis; L-valine biosynthesis; L-valine from pyruvate: step 2/4. Functionally, involved in the biosynthesis of branched-chain amino acids (BCAA). Catalyzes an alkyl-migration followed by a ketol-acid reduction of (S)-2-acetolactate (S2AL) to yield (R)-2,3-dihydroxy-isovalerate. In the isomerase reaction, S2AL is rearranged via a Mg-dependent methyl migration to produce 3-hydroxy-3-methyl-2-ketobutyrate (HMKB). In the reductase reaction, this 2-ketoacid undergoes a metal-dependent reduction by NADPH to yield (R)-2,3-dihydroxy-isovalerate. This is Ketol-acid reductoisomerase (NADP(+)) from Bartonella tribocorum (strain CIP 105476 / IBS 506).